The sequence spans 568 residues: Probable pectinesterase/pectinesterase inhibitor 23 (568 aa).

An N-terminal signal peptide occupies residues 1 to 33; it reads MGSDGDKKKKFIVAGSVSGFLVIMVVSVAVVTS. A pectinesterase inhibitor 23 region spans residues 45–198; that stretch reads RKTTKAVQAV…RELSSNSLAM (154 aa). N-linked (GlcNAc...) asparagine glycosylation is found at Asn-94, Asn-210, and Asn-316. The interval 251 to 548 is pectinesterase 23; that stretch reads PGPVKANAVV…PQDALLYTGD (298 aa). Thr-333 and Gln-363 together coordinate substrate. Catalysis depends on Asp-386, which acts as the Proton donor; for pectinesterase activity. Cys-400 and Cys-420 are disulfide-bonded. The Nucleophile; for pectinesterase activity role is filled by Asp-407. Substrate is bound by residues Arg-475 and Trp-477.

In the N-terminal section; belongs to the PMEI family. This sequence in the C-terminal section; belongs to the pectinesterase family. Expressed in mature pollen grains in the anthers and on the stigma. Found in pollen tubes within the style.

The protein resides in the secreted. The protein localises to the cell wall. The catalysed reaction is [(1-&gt;4)-alpha-D-galacturonosyl methyl ester](n) + n H2O = [(1-&gt;4)-alpha-D-galacturonosyl](n) + n methanol + n H(+). It functions in the pathway glycan metabolism; pectin degradation; 2-dehydro-3-deoxy-D-gluconate from pectin: step 1/5. Acts in the modification of cell walls via demethylesterification of cell wall pectin. This chain is Probable pectinesterase/pectinesterase inhibitor 23 (PME23), found in Arabidopsis thaliana (Mouse-ear cress).